A 752-amino-acid chain; its full sequence is MFIEVEKFVEARTNSIAQLLKAIDNDALVSGEVTKGPRTAAQRLPRHMRRRAMAYDIRRFPRTMREFAAAHLISKHAKKCPSRFARRKSANSRTKFGRSTSTKGIWLSTHVWHAKRFRMIQKWGFKLADRSFQRGFRAVLRDSNKNCVIRDRSYYTCVTIQCTDAYSKISQFSQKGCRGQSSRDEEEECHQLYMPGKYPFGYIGPARFQRLSGDKVHIWIHPSSKLQFMKALLEYYNLEKQENTEEDLYKNSEIKVSIDAENICRFHLSGPKCLSKLRDSIRFVNDEKFSSEHNYFLSVSDSVFQSSRDGEVINLLIEDPRTTWDRKTVLKHKKVNKEADNERIRVSKFWNKEFREMAIEKRMADSEFHKQNSSKINGVISTEAKVPIILIIRNEGLKALDGADILIPEPFAKDFWVSLQRRGVRASGLRDEYAAHLESKALYYPLDDVGSEAGRESELAMKKELIEKYLGKPHNRRCKHWSAVSVKYPFEFKWDELSQDWNLSNKPRSEAFVCRDLQKLRIIEEAMKKGSGLEEFQEPGMLIPVKLQFFGRGRPKKYGMVCLPTDDDLISIRKNRNREIIQTPPEASSQDSDIVEAMEIEEITVKKNQGFMSLEAAASEKPINLKLLFEETTKLDDKTTKRKRVNRKKRESKKRRKIEQEKRKEEAEVEEVQKLATKYRFSANREIIGRLVAGEQSVLAGHGVGIGYICANTLSLIASNYHKSKTVVMVRNSTSKYYHPAYVTILKNATKI.

The disordered stretch occupies residues 638 to 663 (KTTKRKRVNRKKRESKKRRKIEQEKR). The span at 640-657 (TKRKRVNRKKRESKKRRK) shows a compositional bias: basic residues.

As to quaternary structure, component of nuclear RNase P and RNase MRP ribonucleoproteins. Several subunits of RNase P are also part of the RNase MRP complex.

It is found in the nucleus. The protein localises to the nucleolus. It carries out the reaction Endonucleolytic cleavage of RNA, removing 5'-extranucleotides from tRNA precursor.. In terms of biological role, component of ribonuclease P, a ribonucleoprotein complex that generates mature tRNA molecules by cleaving their 5'-ends. Also a component of the MRP ribonuclease complex, which cleaves pre-rRNA sequences. This Caenorhabditis elegans protein is Ribonucleases P/MRP protein subunit popl-1.